A 354-amino-acid chain; its full sequence is Sorbitol dehydrogenase (354 aa).

Residue cysteine 43 coordinates Zn(2+). Tyrosine 49 contacts substrate. 2 residues coordinate Zn(2+): histidine 67 and glutamate 68. A substrate-binding site is contributed by glutamate 153. NAD(+) contacts are provided by isoleucine 181, aspartate 201, and arginine 206. Residues serine 208 and serine 222 each carry the phosphoserine modification. Residues 270 to 272 (VGL) and 294 to 296 (VFR) each bind NAD(+). Positions 296 and 297 each coordinate substrate.

Belongs to the zinc-containing alcohol dehydrogenase family. As to quaternary structure, homotetramer. It depends on Zn(2+) as a cofactor. Expressed in liver.

Its subcellular location is the mitochondrion membrane. The protein localises to the cell projection. The protein resides in the cilium. It localises to the flagellum. The enzyme catalyses xylitol + NAD(+) = D-xylulose + NADH + H(+). It carries out the reaction L-iditol + NAD(+) = keto-L-sorbose + NADH + H(+). It catalyses the reaction keto-D-fructose + NADH + H(+) = D-sorbitol + NAD(+). Functionally, polyol dehydrogenase that catalyzes the reversible NAD(+)-dependent oxidation of various sugar alcohols. Is mostly active with xylitol, L-iditol and D-sorbitol (D-glucitol) as substrates, leading to the C2-oxidized products D-xylulose, L-sorbose and D-fructose, respectively. Is a key enzyme in the polyol pathway that interconverts glucose and fructose via sorbitol, which constitutes an important alternate route for glucose metabolism. May play a role in sperm motility by using sorbitol as an alternative energy source for sperm motility. The chain is Sorbitol dehydrogenase (SORD) from Ovis aries (Sheep).